A 358-amino-acid chain; its full sequence is Heme A synthase (358 aa).

8 helical membrane passes run 22–42, 107–127, 133–153, 172–192, 208–228, 269–289, 302–322, and 324–344; these read IQVWLYSILLLCLAIVLVGGA, VLGRLVGLVALLGLIWFWAIK, VLLQLIIVPILIAFQGVVGWW, LAFHLITACFVIIFVTYLSQG, FAGWLVVLILIEVYFGALVAG, FVHRFFAYILFFVAIIHAFYV, AFFICVMIAVQALLGIITLLQ, and VPISLGLIHQSVALAILCFSV. Histidine 271 serves as a coordination point for heme. Residue histidine 332 coordinates heme.

It belongs to the COX15/CtaA family. Type 2 subfamily. As to quaternary structure, interacts with CtaB. Heme b is required as a cofactor.

Its subcellular location is the cell membrane. The catalysed reaction is Fe(II)-heme o + 2 A + H2O = Fe(II)-heme a + 2 AH2. It functions in the pathway porphyrin-containing compound metabolism; heme A biosynthesis; heme A from heme O: step 1/1. Its function is as follows. Catalyzes the conversion of heme O to heme A by two successive hydroxylations of the methyl group at C8. The first hydroxylation forms heme I, the second hydroxylation results in an unstable dihydroxymethyl group, which spontaneously dehydrates, resulting in the formyl group of heme A. In Bartonella henselae (strain ATCC 49882 / DSM 28221 / CCUG 30454 / Houston 1) (Rochalimaea henselae), this protein is Heme A synthase.